We begin with the raw amino-acid sequence, 220 residues long: Flavin-dependent thymidylate synthase (220 aa).

The ThyX domain occupies 1-208 (MKIDILDKGF…PWTFEAFLKY (208 aa)). FAD contacts are provided by residues Thr55, 78 to 80 (RHR), and Glu86. DUMP contacts are provided by residues 75-78 (QWFR), 86-90 (ELSGR), and Arg147. The ThyX motif signature appears at 78-88 (RHRIASYNELS). FAD-binding positions include 163-165 (NAR) and Asn169. Residue Arg174 participates in dUMP binding. The Involved in ionization of N3 of dUMP, leading to its activation role is filled by Arg174.

It belongs to the thymidylate synthase ThyX family. In terms of assembly, homotetramer. The cofactor is FAD.

It carries out the reaction dUMP + (6R)-5,10-methylene-5,6,7,8-tetrahydrofolate + NADPH + H(+) = dTMP + (6S)-5,6,7,8-tetrahydrofolate + NADP(+). It functions in the pathway pyrimidine metabolism; dTTP biosynthesis. In terms of biological role, catalyzes the reductive methylation of 2'-deoxyuridine-5'-monophosphate (dUMP) to 2'-deoxythymidine-5'-monophosphate (dTMP) while utilizing 5,10-methylenetetrahydrofolate (mTHF) as the methyl donor, and NADPH and FADH(2) as the reductant. This chain is Flavin-dependent thymidylate synthase, found in Thermotoga sp. (strain RQ2).